The following is a 313-amino-acid chain: Formimidoylglutamase (313 aa).

The Mn(2+) site is built by His130, Asp155, His157, Asp159, Asp241, and Asp243.

This sequence belongs to the arginase family. Mn(2+) serves as cofactor.

It carries out the reaction N-formimidoyl-L-glutamate + H2O = formamide + L-glutamate. Its pathway is amino-acid degradation; L-histidine degradation into L-glutamate; L-glutamate from N-formimidoyl-L-glutamate (hydrolase route): step 1/1. Functionally, catalyzes the conversion of N-formimidoyl-L-glutamate to L-glutamate and formamide. The polypeptide is Formimidoylglutamase (Salmonella typhi).